Reading from the N-terminus, the 907-residue chain is Interference hedgehog (907 aa).

A signal peptide spans 1–23 (MSLTRRFSLTLLLLLPLLTSLLA). Residues 24–709 (AIPVLQANLS…SHNETFNMNP (686 aa)) are Extracellular-facing. Ig-like C2-type domains follow at residues 42–149 (PGVR…ASIS), 152–233 (GADT…VRLA), 252–340 (PALL…FIEL), and 346–433 (PRIL…LQVN). Cystine bridges form between C65–C127, C173–C221, and C276–C324. N-linked (GlcNAc...) asparagine glycans are attached at residues N101, N203, N300, and N355. Residues C367 and C415 are joined by a disulfide bond. The tract at residues 427 to 474 (GTLLQVNPKQLPDGEGTGMDSGRSSARPTHSRKQKQQTQMVPPSAPNV) is disordered. Residues 462–474 (QQTQMVPPSAPNV) show a composition bias toward polar residues. Fibronectin type-III domains follow at residues 468–578 (PPSA…LQRG) and 586–681 (VPEL…TQRP). The N-linked (GlcNAc...) asparagine glycan is linked to N473. Residues R504, K511, and K513 each contribute to the heparin site. N-linked (GlcNAc...) asparagine glycosylation is found at N537 and N548. R552 is a heparin binding site. Residue N568 is glycosylated (N-linked (GlcNAc...) asparagine). The span at 676 to 688 (GRTQRPRASSTPQ) shows a compositional bias: polar residues. A disordered region spans residues 676-701 (GRTQRPRASSTPQPVLHAVDTTTPSH). The N-linked (GlcNAc...) asparagine glycan is linked to N702. Residues 710–730 (MLTGTIGGGALLVLLVISACL) form a helical membrane-spanning segment. Topologically, residues 731 to 907 (CLCRRRSSRG…SSGSLNSVGV (177 aa)) are cytoplasmic. Disordered stretches follow at residues 780-805 (AQQQQQQQQQQLQQQQHDEKEAQDND) and 829-881 (MSSS…NKPG). 2 stretches are compositionally biased toward low complexity: residues 781 to 794 (QQQQQQQQQQLQQQ) and 853 to 863 (NNNNLNQPGDG). The span at 865 to 878 (LANSADSPRLQASN) shows a compositional bias: polar residues.

The protein belongs to the immunoglobulin superfamily. IHOG family. In terms of assembly, homodimer. Heterotetramer; 2 iHog chains bind 2 hh chains when facilitated by heparin, heparin is required to promote high-affinity interactions between hh and iHog.

The protein resides in the membrane. In terms of biological role, mediates response to the active Hedgehog (Hh) protein signal in embryos, functioning upstream or at the level of patched (ptc). This chain is Interference hedgehog, found in Drosophila virilis (Fruit fly).